Here is a 603-residue protein sequence, read N- to C-terminus: UvrABC system protein C (603 aa).

Residues 14–92 enclose the GIY-YIG domain; sequence ELPGVYRMLD…IKSLAPRYNI (79 aa). A UVR domain is found at 201–236; it reads QEVTRRLTKSMEEASAKLAFEQAAVFRDQIQSLHQV.

The protein belongs to the UvrC family. In terms of assembly, interacts with UvrB in an incision complex.

The protein localises to the cytoplasm. The UvrABC repair system catalyzes the recognition and processing of DNA lesions. UvrC both incises the 5' and 3' sides of the lesion. The N-terminal half is responsible for the 3' incision and the C-terminal half is responsible for the 5' incision. The chain is UvrABC system protein C from Dechloromonas aromatica (strain RCB).